An 85-amino-acid chain; its full sequence is F(1)-ATPase inhibitor IF(1), mitochondrial (85 aa).

The transit peptide at 1–22 (MLPRSALARSLQLQRGVAARFY) directs the protein to the mitochondrion. Residues 41–84 (KRERATEDFFVRQREKEQLRHLKEQLEKQRKKIDSLENKIDSMT) adopt a coiled-coil conformation.

It belongs to the ATPase inhibitor family. In terms of assembly, monomer and homodimer. The protein aggregates less strongly with increasing pH.

Its subcellular location is the mitochondrion. Endogenous ATPase inhibitor, which inhibits specifically the reverse ATPase reaction of mitochondrial F(1)F(0)-type ATP synthase. It limits ATP depletion when the mitochondrial membrane potential falls below a threshold and the F(1)F(0)-ATP synthase starts hydrolyzing ATP to pump protons out of the mitochondrial matrix. Required to avoid the consumption of cellular ATP when the F(1)F(0)-ATP synthase enzyme acts as an ATP hydrolase. Functions through inserting its N-terminal part into the catalytically active F1-ATPase, thereby blocking its rotational movement and subsequently the ATP hydrolase activity. The chain is F(1)-ATPase inhibitor IF(1), mitochondrial (INH1) from Saccharomyces cerevisiae (strain ATCC 204508 / S288c) (Baker's yeast).